The primary structure comprises 419 residues: MQISDAWIRKVFTGRGDVTVEVELTVEDSVTGDVLVTRAAAPAGASRGAHEVLYFPEGGVDAALAAFEKLVAPEIVGLDVTEPYSTDGKLEEVDGTQRFEKIGGAVAIATSFAAAEAGAASLGVPLYSFIGGAYARRLPLPLGNVIGGGKHSRGLGPDIQEFLAMPLNPPDIYTAVYTNVEIHKRVLKYILKVDTSFTGGKNDEGAWTPRISSTTALKILREAAREVSGELGVEVGIGVDVAASSLWNGEKYVYKNEGVERDPREQFEFIAKLIEEYDLVYVEDPFHEEDFQSFAELRDRFKDRLIVGDDLFVTNPERIKKGGKIGAATGVIIKPDQIGTLLRAHQAVSAAREFGMRVIVSHRSGDTEYKTLAHIAVGFGAEVIKTGIMGGERTAKLNELIRIGDYLGKWATITQIRIH.

Q160 provides a ligand contact to (2R)-2-phosphoglycerate. Residue E204 is the Proton donor of the active site. Residues D240, E283, and D309 each contribute to the Mg(2+) site. (2R)-2-phosphoglycerate is bound by residues K334, R363, S364, and K385. The active-site Proton acceptor is the K334.

Belongs to the enolase family. Requires Mg(2+) as cofactor.

The protein localises to the cytoplasm. It localises to the secreted. It is found in the cell surface. The enzyme catalyses (2R)-2-phosphoglycerate = phosphoenolpyruvate + H2O. The protein operates within carbohydrate degradation; glycolysis; pyruvate from D-glyceraldehyde 3-phosphate: step 4/5. Its function is as follows. Catalyzes the reversible conversion of 2-phosphoglycerate (2-PG) into phosphoenolpyruvate (PEP). It is essential for the degradation of carbohydrates via glycolysis. The protein is Enolase of Pyrobaculum aerophilum (strain ATCC 51768 / DSM 7523 / JCM 9630 / CIP 104966 / NBRC 100827 / IM2).